Reading from the N-terminus, the 443-residue chain is Glutamate-1-semialdehyde 2,1-aminomutase (443 aa).

N6-(pyridoxal phosphate)lysine is present on K281.

Belongs to the class-III pyridoxal-phosphate-dependent aminotransferase family. HemL subfamily. In terms of assembly, homodimer. The cofactor is pyridoxal 5'-phosphate.

It is found in the cytoplasm. The catalysed reaction is (S)-4-amino-5-oxopentanoate = 5-aminolevulinate. The protein operates within porphyrin-containing compound metabolism; protoporphyrin-IX biosynthesis; 5-aminolevulinate from L-glutamyl-tRNA(Glu): step 2/2. This chain is Glutamate-1-semialdehyde 2,1-aminomutase, found in Leptospira interrogans serogroup Icterohaemorrhagiae serovar Lai (strain 56601).